The following is a 228-amino-acid chain: 7-cyano-7-deazaguanine synthase (228 aa).

10–20 (FSGGQDSTTLA) lines the ATP pocket. 4 residues coordinate Zn(2+): Cys-190, Cys-205, Cys-208, and Cys-211.

It belongs to the QueC family. Zn(2+) serves as cofactor.

The enzyme catalyses 7-carboxy-7-deazaguanine + NH4(+) + ATP = 7-cyano-7-deazaguanine + ADP + phosphate + H2O + H(+). The protein operates within purine metabolism; 7-cyano-7-deazaguanine biosynthesis. Functionally, catalyzes the ATP-dependent conversion of 7-carboxy-7-deazaguanine (CDG) to 7-cyano-7-deazaguanine (preQ(0)). This is 7-cyano-7-deazaguanine synthase from Helicobacter pylori (strain HPAG1).